The primary structure comprises 196 residues: uncharacterized protein (196 aa).

2 CBS domains span residues 10–69 (ARRD…NPDE) and 76–132 (MSQP…LVAT). Residues 153–187 (IIEGVCDLCETYSEELRFVDGVWVCPECYEDILGR) enclose the ACP-type MB domain. Fe cation-binding residues include Cys158, Cys161, Cys177, and Cys180. Zn(2+) is bound by residues Cys158, Cys161, Cys177, and Cys180.

This is an uncharacterized protein from Methanopyrus kandleri (strain AV19 / DSM 6324 / JCM 9639 / NBRC 100938).